A 621-amino-acid chain; its full sequence is Microbial serine proteinase (621 aa).

Residues 1-24 (MRKTSLALAISALLSALPIASVQA) form the signal peptide. Residues 68–440 (PRGGMAGNDL…FGLVDVNKTQ (373 aa)) form the Peptidase S8 domain. Asp-98 functions as the Charge relay system in the catalytic mechanism. The disordered stretch occupies residues 114–133 (PGSKNVVTGGSDPTPTDPDR). Residues His-137 and Ser-354 each act as charge relay system in the active site. The 166-residue stretch at 454 to 619 (AVALAKGKGN…GYSVLGHDAA (166 aa)) folds into the P/Homo B domain. The tract at residues 457–485 (LAKGKGNGRSPSAPSRYVGSSPTRSSTQV) is disordered. A compositionally biased stretch (polar residues) spans 465–485 (RSPSAPSRYVGSSPTRSSTQV).

This sequence belongs to the peptidase S8 family.

Its function is as follows. Agent of furonculosis. In Aeromonas salmonicida, this protein is Microbial serine proteinase (aspA).